The following is a 728-amino-acid chain: Phosphoribosylformylglycinamidine synthase subunit PurL (728 aa).

His42 is an active-site residue. ATP contacts are provided by Tyr45 and Lys84. Position 86 (Glu86) interacts with Mg(2+). Substrate contacts are provided by residues 87-90 (SHNH) and Arg109. His88 functions as the Proton acceptor in the catalytic mechanism. Residue Asp110 participates in Mg(2+) binding. Gln237 contributes to the substrate binding site. Asp265 is a binding site for Mg(2+). 309–311 (ESQ) lines the substrate pocket. 2 residues coordinate ATP: Asp491 and Gly528. Asn529 serves as a coordination point for Mg(2+). Ser531 lines the substrate pocket.

The protein belongs to the FGAMS family. As to quaternary structure, monomer. Part of the FGAM synthase complex composed of 1 PurL, 1 PurQ and 2 PurS subunits.

The protein resides in the cytoplasm. It catalyses the reaction N(2)-formyl-N(1)-(5-phospho-beta-D-ribosyl)glycinamide + L-glutamine + ATP + H2O = 2-formamido-N(1)-(5-O-phospho-beta-D-ribosyl)acetamidine + L-glutamate + ADP + phosphate + H(+). It functions in the pathway purine metabolism; IMP biosynthesis via de novo pathway; 5-amino-1-(5-phospho-D-ribosyl)imidazole from N(2)-formyl-N(1)-(5-phospho-D-ribosyl)glycinamide: step 1/2. Its function is as follows. Part of the phosphoribosylformylglycinamidine synthase complex involved in the purines biosynthetic pathway. Catalyzes the ATP-dependent conversion of formylglycinamide ribonucleotide (FGAR) and glutamine to yield formylglycinamidine ribonucleotide (FGAM) and glutamate. The FGAM synthase complex is composed of three subunits. PurQ produces an ammonia molecule by converting glutamine to glutamate. PurL transfers the ammonia molecule to FGAR to form FGAM in an ATP-dependent manner. PurS interacts with PurQ and PurL and is thought to assist in the transfer of the ammonia molecule from PurQ to PurL. The polypeptide is Phosphoribosylformylglycinamidine synthase subunit PurL (Campylobacter jejuni subsp. jejuni serotype O:23/36 (strain 81-176)).